The chain runs to 249 residues: MKLLVDAGNSRIKWWVPECQAHGVVDRLALDDLAGEIAAVIDISKLSSVRVSCVAGKSIETQLRGELGFARDLDVKFARVSSPLPILTVAYREIHRLGVDRWLAMLAVREKFPDRFCAVLDAGSAVTVDFVTEAGVHEGGMIVPGVQTMARALWSNTSDVAVERLELVPRWCPGVDTYDCVRQGVSALYTGLVNEVHSYIDGSAERHLSPAIVVTGGDRHWFTQAFSSPVVVDPHLVLKGLLVLDELEK.

6–13 (DAGNSRIK) lines the ATP pocket. Residues Phe77 and 98–101 (GVDR) contribute to the substrate site. Asp100 functions as the Proton acceptor in the catalytic mechanism. Residue Asp121 coordinates K(+). Ser124 lines the ATP pocket. Thr177 contributes to the substrate binding site.

Belongs to the type III pantothenate kinase family. In terms of assembly, homodimer. NH4(+) is required as a cofactor. It depends on K(+) as a cofactor.

The protein resides in the cytoplasm. The enzyme catalyses (R)-pantothenate + ATP = (R)-4'-phosphopantothenate + ADP + H(+). The protein operates within cofactor biosynthesis; coenzyme A biosynthesis; CoA from (R)-pantothenate: step 1/5. Functionally, catalyzes the phosphorylation of pantothenate (Pan), the first step in CoA biosynthesis. In Teredinibacter turnerae (strain ATCC 39867 / T7901), this protein is Type III pantothenate kinase.